Reading from the N-terminus, the 235-residue chain is Leucyl/phenylalanyl-tRNA--protein transferase (235 aa).

The protein belongs to the L/F-transferase family.

Its subcellular location is the cytoplasm. It catalyses the reaction N-terminal L-lysyl-[protein] + L-leucyl-tRNA(Leu) = N-terminal L-leucyl-L-lysyl-[protein] + tRNA(Leu) + H(+). It carries out the reaction N-terminal L-arginyl-[protein] + L-leucyl-tRNA(Leu) = N-terminal L-leucyl-L-arginyl-[protein] + tRNA(Leu) + H(+). The catalysed reaction is L-phenylalanyl-tRNA(Phe) + an N-terminal L-alpha-aminoacyl-[protein] = an N-terminal L-phenylalanyl-L-alpha-aminoacyl-[protein] + tRNA(Phe). In terms of biological role, functions in the N-end rule pathway of protein degradation where it conjugates Leu, Phe and, less efficiently, Met from aminoacyl-tRNAs to the N-termini of proteins containing an N-terminal arginine or lysine. This Shewanella frigidimarina (strain NCIMB 400) protein is Leucyl/phenylalanyl-tRNA--protein transferase.